The following is a 254-amino-acid chain: NAD-dependent protein deacylase (254 aa).

One can recognise a Deacetylase sirtuin-type domain in the interval 1–250; the sequence is MERLEEARKR…LPPSPEDQAE (250 aa). Residue 22–41 coordinates NAD(+); sequence GAGISKPSGIPTFRDAEGLW. Tyrosine 66 and arginine 69 together coordinate substrate. 104–107 is a binding site for NAD(+); the sequence is QNVD. The active-site Proton acceptor is the histidine 122. Zn(2+) contacts are provided by cysteine 130, cysteine 133, cysteine 149, and cysteine 152. Residues 189–191, 215–217, and alanine 233 each bind NAD(+); these read GTS and NPE.

This sequence belongs to the sirtuin family. Class III subfamily. Zn(2+) serves as cofactor.

The protein resides in the cytoplasm. The enzyme catalyses N(6)-acetyl-L-lysyl-[protein] + NAD(+) + H2O = 2''-O-acetyl-ADP-D-ribose + nicotinamide + L-lysyl-[protein]. The catalysed reaction is N(6)-succinyl-L-lysyl-[protein] + NAD(+) + H2O = 2''-O-succinyl-ADP-D-ribose + nicotinamide + L-lysyl-[protein]. NAD-dependent lysine deacetylase and desuccinylase that specifically removes acetyl and succinyl groups on target proteins. Modulates the activities of several proteins which are inactive in their acylated form. The protein is NAD-dependent protein deacylase of Thermus thermophilus (strain ATCC 27634 / DSM 579 / HB8).